The primary structure comprises 403 residues: Tetratricopeptide repeat protein 19, mitochondrial (403 aa).

The N-terminal 67 residues, 1 to 67, are a transit peptide targeting the mitochondrion; that stretch reads MALRSYCRQL…WHRRSWHRCA (67 aa). TPR repeat units follow at residues 154-187, 297-330, and 336-369; these read IYTY…MLSG, LVLM…GQAA, and HVLL…AHTA.

It belongs to the TTC19 family. As to quaternary structure, binds to the mature mitochondrial complex III dimer, after the incorporation of the Rieske protein (UQCRFS1). Interacts with UQCRC1 and UQCRFS1. Interacts with ZFYVE26 and CHMP4B.

It is found in the mitochondrion inner membrane. Required for the preservation of the structural and functional integrity of mitochondrial respiratory complex III by allowing the physiological turnover of the Rieske protein UQCRFS1. Involved in the clearance of UQCRFS1 N-terminal fragments, which are produced upon incorporation into the complex III and whose presence is detrimental for its catalytic activity. This is Tetratricopeptide repeat protein 19, mitochondrial (ttc19) from Danio rerio (Zebrafish).